A 276-amino-acid polypeptide reads, in one-letter code: uncharacterized protein (276 aa).

Residues 20–137 form the AB hydrolase-1 domain; sequence PVLIFIPGAN…PPINTFLPDS (118 aa). The tract at residues 57–76 is disordered; the sequence is GESELTEPLPDSASNPDSDY.

Belongs to the AB hydrolase superfamily.

This is an uncharacterized protein from Staphylococcus aureus (strain COL).